We begin with the raw amino-acid sequence, 303 residues long: Pantothenate synthetase (303 aa).

30–37 lines the ATP pocket; that stretch reads MGYLHAGH. H37 functions as the Proton donor in the catalytic mechanism. Residue Q61 participates in (R)-pantoate binding. Residue Q61 participates in beta-alanine binding. 147 to 150 provides a ligand contact to ATP; that stretch reads GAKD. A (R)-pantoate-binding site is contributed by Q153. ATP contacts are provided by residues V176 and 184 to 187; that span reads LSSR.

It belongs to the pantothenate synthetase family. In terms of assembly, homodimer.

The protein resides in the cytoplasm. The enzyme catalyses (R)-pantoate + beta-alanine + ATP = (R)-pantothenate + AMP + diphosphate + H(+). It functions in the pathway cofactor biosynthesis; (R)-pantothenate biosynthesis; (R)-pantothenate from (R)-pantoate and beta-alanine: step 1/1. Its function is as follows. Catalyzes the condensation of pantoate with beta-alanine in an ATP-dependent reaction via a pantoyl-adenylate intermediate. This Rhizobium johnstonii (strain DSM 114642 / LMG 32736 / 3841) (Rhizobium leguminosarum bv. viciae) protein is Pantothenate synthetase.